We begin with the raw amino-acid sequence, 443 residues long: Histidinol dehydrogenase (443 aa).

Residues Tyr133, Gln191, and Asn214 each contribute to the NAD(+) site. The substrate site is built by Ser240, Gln262, and His265. Zn(2+)-binding residues include Gln262 and His265. Active-site proton acceptor residues include Glu329 and His330. Substrate contacts are provided by His330, Asp363, Glu417, and His422. Asp363 provides a ligand contact to Zn(2+). His422 contributes to the Zn(2+) binding site.

This sequence belongs to the histidinol dehydrogenase family. Homodimer. Zn(2+) serves as cofactor.

The catalysed reaction is L-histidinol + 2 NAD(+) + H2O = L-histidine + 2 NADH + 3 H(+). It functions in the pathway amino-acid biosynthesis; L-histidine biosynthesis; L-histidine from 5-phospho-alpha-D-ribose 1-diphosphate: step 9/9. In terms of biological role, catalyzes the sequential NAD-dependent oxidations of L-histidinol to L-histidinaldehyde and then to L-histidine. This is Histidinol dehydrogenase from Yersinia pestis.